The following is a 488-amino-acid chain: Wax ester synthase/diacylglycerol acyltransferase 8 (488 aa).

The Cytoplasmic segment spans residues methionine 1–arginine 195. Histidine 135 functions as the Proton acceptor in the catalytic mechanism. The helical transmembrane segment at leucine 196 to leucine 214 threads the bilayer. The Lumenal segment spans residues lysine 215 to valine 488. N-linked (GlcNAc...) asparagine glycans are attached at residues asparagine 238, asparagine 252, asparagine 353, and asparagine 397.

It in the N-terminal section; belongs to the long-chain O-acyltransferase family. As to expression, mostly expressed in flowers and siliques and at low levels in stems.

The protein resides in the cell membrane. It localises to the endoplasmic reticulum membrane. It catalyses the reaction an acyl-CoA + a 1,2-diacyl-sn-glycerol = a triacyl-sn-glycerol + CoA. It carries out the reaction a long chain fatty alcohol + a fatty acyl-CoA = a wax ester + CoA. The protein operates within glycerolipid metabolism; triacylglycerol biosynthesis. It functions in the pathway lipid metabolism. Functionally, bifunctional wax ester synthase/diacylglycerol acyltransferase. Involved in cuticular wax biosynthesis. This chain is Wax ester synthase/diacylglycerol acyltransferase 8, found in Arabidopsis thaliana (Mouse-ear cress).